A 311-amino-acid chain; its full sequence is Ciliary microtubule inner protein 2B (311 aa).

Disordered stretches follow at residues 64–93 and 150–183; these read PFPPAPRGHSYNEASQELGGRRRRQRLGDP and QEGRQPQTEHEKQLLTARHRTPLPALSKEPAPFM.

Belongs to the CIMIP2 family. In terms of tissue distribution, expressed in airway epithelial cells.

The protein resides in the cytoplasm. It localises to the cytoskeleton. It is found in the cilium axoneme. In terms of biological role, microtubule inner protein (MIP) part of the dynein-decorated doublet microtubules (DMTs) in cilia axoneme, which is required for motile cilia beating. This chain is Ciliary microtubule inner protein 2B (cimip2b), found in Xenopus laevis (African clawed frog).